A 239-amino-acid polypeptide reads, in one-letter code: Ribose-5-phosphate isomerase A (239 aa).

Substrate contacts are provided by residues 31-34 (FGST), 88-91 (DGAD), and 101-104 (KGGG). The active-site Proton acceptor is the Glu-110. Lys-128 serves as a coordination point for substrate.

Belongs to the ribose 5-phosphate isomerase family. Homodimer.

It carries out the reaction aldehydo-D-ribose 5-phosphate = D-ribulose 5-phosphate. Its pathway is carbohydrate degradation; pentose phosphate pathway; D-ribose 5-phosphate from D-ribulose 5-phosphate (non-oxidative stage): step 1/1. Catalyzes the reversible conversion of ribose-5-phosphate to ribulose 5-phosphate. The sequence is that of Ribose-5-phosphate isomerase A from Chloroflexus aurantiacus (strain ATCC 29366 / DSM 635 / J-10-fl).